Consider the following 218-residue polypeptide: DNA-directed RNA polymerase III subunit RPC7-like (218 aa).

The segment at 133–218 (LPKRPPKTTE…SDDNMDEAIY (86 aa)) is disordered. Basic and acidic residues predominate over residues 139-160 (KTTEDKEETIQKLETLEKKEEE). Acidic residues-rich tracts occupy residues 161 to 193 (VTSE…EETD) and 201 to 218 (NGED…EAIY).

The protein belongs to the eukaryotic RPC7 RNA polymerase subunit family. In terms of assembly, component of the RNA polymerase III (Pol III) complex consisting of 17 subunits. Pol III exists as two alternative complexes defined by the mutually exclusive incorporation of subunit POLR3G/RPC7alpha or POLR3GL/RPC7beta. Found in a trimeric complex with POLR3C/RPC3 and POLR3F/RPC6. Directly interacts with POLR3C. As to expression, widely expressed. Expressed in CD4-positive T cells.

The protein localises to the nucleus. DNA-dependent RNA polymerase catalyzes the transcription of DNA into RNA using the four ribonucleoside triphosphates as substrates. Specific peripheric component of RNA polymerase III which synthesizes small RNAs, such as 5S rRNA and tRNAs. This Homo sapiens (Human) protein is DNA-directed RNA polymerase III subunit RPC7-like.